The following is a 103-amino-acid chain: MGKLTLLLLAILVWLQYSLWFGKNGIHDYTRVNDDVAAQQATNAKLKARNDQLFAEIDDLNGGQEALEERARNELSMTRPGETFYRLVPDASKRAQSAGQNNR.

Over 1 to 3 (MGK) the chain is Cytoplasmic. A helical membrane pass occupies residues 4–21 (LTLLLLAILVWLQYSLWF). Residues 22 to 103 (GKNGIHDYTR…RAQSAGQNNR (82 aa)) lie on the Periplasmic side of the membrane. Positions 31-71 (RVNDDVAAQQATNAKLKARNDQLFAEIDDLNGGQEALEERA) form a coiled coil.

Belongs to the FtsB family. In terms of assembly, part of a complex composed of FtsB, FtsL and FtsQ.

The protein resides in the cell inner membrane. Its function is as follows. Essential cell division protein. May link together the upstream cell division proteins, which are predominantly cytoplasmic, with the downstream cell division proteins, which are predominantly periplasmic. The sequence is that of Cell division protein FtsB from Escherichia coli O157:H7.